The chain runs to 103 residues: MATYAIVKTGGKQYKVAVGDLVKVEKIDSEPGSSVQLPVALVVDGATVTTDADKLAKVAVTGEIVEHTKGPKIRIHKFKNKTGYHKRQGHRQRLTVLKVTGIK.

The protein belongs to the bacterial ribosomal protein bL21 family. As to quaternary structure, part of the 50S ribosomal subunit. Contacts protein L20.

This protein binds to 23S rRNA in the presence of protein L20. The protein is Large ribosomal subunit protein bL21 of Mycobacteroides abscessus (strain ATCC 19977 / DSM 44196 / CCUG 20993 / CIP 104536 / JCM 13569 / NCTC 13031 / TMC 1543 / L948) (Mycobacterium abscessus).